The sequence spans 1524 residues: Protein dispatched homolog 1 (1524 aa).

The N-linked (GlcNAc...) asparagine glycan is linked to asparagine 59. 4 helical membrane-spanning segments follow: residues 190-210 (VVVL…GVLV), 500-520 (LLMD…VMCV), 525-545 (MFIT…SYFL), and 549-569 (VFHF…LVGI). The SSD domain maps to 486–658 (GIEFGIKHSL…VTWLPAVVVL (173 aa)). Asparagine 582 carries N-linked (GlcNAc...) asparagine glycosylation. A run of 8 helical transmembrane segments spans residues 604-624 (AALS…ANYV), 638-658 (GTAI…VVVL), 719-739 (YLWL…VCIN), 988-1008 (MGLS…NIII), 1010-1030 (LYAI…LVLL), 1040-1060 (VTIS…GVAY), 1079-1099 (VGSA…MMMP), and 1107-1127 (QLGT…TFFF).

It belongs to the dispatched family. In terms of assembly, interacts with SHH via the cholesterol anchor of the dually lipid-modified SHH (ShhNp).

The protein localises to the membrane. Functionally, functions in hedgehog (Hh) signaling. Regulates the release and extracellular accumulation of cholesterol-modified hedgehog proteins and is hence required for effective production of the Hh signal. Synergizes with SCUBE2 to cause an increase in SHH secretion. In Homo sapiens (Human), this protein is Protein dispatched homolog 1 (DISP1).